We begin with the raw amino-acid sequence, 113 residues long: Nucleoid-associated protein Syncc9605_0027 (113 aa).

The protein belongs to the YbaB/EbfC family. As to quaternary structure, homodimer.

Its subcellular location is the cytoplasm. The protein resides in the nucleoid. Functionally, binds to DNA and alters its conformation. May be involved in regulation of gene expression, nucleoid organization and DNA protection. This is Nucleoid-associated protein Syncc9605_0027 from Synechococcus sp. (strain CC9605).